Here is a 178-residue protein sequence, read N- to C-terminus: Adenine phosphoribosyltransferase (178 aa).

Belongs to the purine/pyrimidine phosphoribosyltransferase family. In terms of assembly, homodimer.

It localises to the cytoplasm. It catalyses the reaction AMP + diphosphate = 5-phospho-alpha-D-ribose 1-diphosphate + adenine. It functions in the pathway purine metabolism; AMP biosynthesis via salvage pathway; AMP from adenine: step 1/1. In terms of biological role, catalyzes a salvage reaction resulting in the formation of AMP, that is energically less costly than de novo synthesis. This is Adenine phosphoribosyltransferase from Novosphingobium aromaticivorans (strain ATCC 700278 / DSM 12444 / CCUG 56034 / CIP 105152 / NBRC 16084 / F199).